The primary structure comprises 138 residues: Putative pre-16S rRNA nuclease (138 aa).

The protein belongs to the YqgF nuclease family.

It is found in the cytoplasm. Functionally, could be a nuclease involved in processing of the 5'-end of pre-16S rRNA. The chain is Putative pre-16S rRNA nuclease from Escherichia fergusonii (strain ATCC 35469 / DSM 13698 / CCUG 18766 / IAM 14443 / JCM 21226 / LMG 7866 / NBRC 102419 / NCTC 12128 / CDC 0568-73).